Here is a 303-residue protein sequence, read N- to C-terminus: Cysteine synthase B (303 aa).

Lysine 41 is subject to N6-(pyridoxal phosphate)lysine. Residues asparagine 71, 174-178, and serine 255 each bind pyridoxal 5'-phosphate; that span reads GTTGT.

The protein belongs to the cysteine synthase/cystathionine beta-synthase family. As to quaternary structure, homodimer. Pyridoxal 5'-phosphate serves as cofactor.

The catalysed reaction is O-acetyl-L-serine + hydrogen sulfide = L-cysteine + acetate. It participates in amino-acid biosynthesis; L-cysteine biosynthesis; L-cysteine from L-serine: step 2/2. Its function is as follows. Two cysteine synthase enzymes are found. Both catalyze the same reaction. Cysteine synthase B can also use thiosulfate in place of sulfide to give cysteine thiosulfonate as a product. The protein is Cysteine synthase B (cysM) of Escherichia coli (strain K12).